The following is a 109-amino-acid chain: Stress-response A/B barrel domain-containing protein HS1 (109 aa).

Positions V8–Y102 constitute a Stress-response A/B barrel domain. V36, I39, E40, and M42 together coordinate Mg(2+).

In terms of assembly, homodimer. Mg(2+) is required as a cofactor.

Heat stable protein involved in defense against fungal pathogens. Possesses antifungal activity against diverse pathogenic fungi. Possesses antimicrobial activity. Possesses ribonuclease activity. The chain is Stress-response A/B barrel domain-containing protein HS1 from Arabidopsis thaliana (Mouse-ear cress).